A 244-amino-acid polypeptide reads, in one-letter code: Monothiol glutaredoxin-4 (244 aa).

The Thioredoxin domain maps to 3-110; sequence VVEIKSQDQF…FVKSLEILSN (108 aa). A disordered region spans residues 116–143; sequence ANNAKGPKSTSDEESSGSSDDEEDETEE. The span at 127–143 shows a compositional bias: acidic residues; that stretch reads DEESSGSSDDEEDETEE. One can recognise a Glutaredoxin domain in the interval 146-244; sequence NARLVKLVQA…DPEYFQHALQ (99 aa). Residue Lys-163 participates in glutathione binding. Position 171 (Cys-171) interacts with [2Fe-2S] cluster. Residues Arg-200, Phe-212, and 225–226 each bind glutathione; that span reads LD.

The protein belongs to the glutaredoxin family. Monothiol subfamily. In terms of assembly, homodimer. Heterodimer with FRA2.

Functionally, monothiol glutaredoxin involved in the biogenesis of iron-sulfur clusters. Binds one iron-sulfur cluster per dimer. The iron-sulfur cluster is bound between subunits, and is complexed by a bound glutathione and a cysteine residue from each subunit. This Saccharomyces cerevisiae (strain ATCC 204508 / S288c) (Baker's yeast) protein is Monothiol glutaredoxin-4 (GRX4).